We begin with the raw amino-acid sequence, 176 residues long: Large ribosomal subunit protein bL17m (176 aa).

The transit peptide at 1 to 8 (MRLSLAAA) directs the protein to the mitochondrion.

Belongs to the bacterial ribosomal protein bL17 family. As to quaternary structure, component of the mitochondrial ribosome large subunit (39S) which comprises a 16S rRNA and about 50 distinct proteins.

Its subcellular location is the mitochondrion. The polypeptide is Large ribosomal subunit protein bL17m (Mrpl17) (Mus musculus (Mouse)).